A 657-amino-acid polypeptide reads, in one-letter code: Glycogen debranching enzyme (657 aa).

Residue Asp336 is the Nucleophile of the active site. Glu371 (proton donor) is an active-site residue. Residues 460–479 are disordered; it reads ANGEENRDGTNNNYSNNHGK.

This sequence belongs to the glycosyl hydrolase 13 family.

It catalyses the reaction Hydrolysis of (1-&gt;6)-alpha-D-glucosidic linkages to branches with degrees of polymerization of three or four glucose residues in limit dextrin.. Its pathway is glycan degradation; glycogen degradation. In terms of biological role, removes maltotriose and maltotetraose chains that are attached by 1,6-alpha-linkage to the limit dextrin main chain, generating a debranched limit dextrin. The sequence is that of Glycogen debranching enzyme from Escherichia coli O9:H4 (strain HS).